The following is a 131-amino-acid chain: Small ribosomal subunit protein bS16 (131 aa).

Residues Ile87–Glu117 show a composition bias toward basic and acidic residues. The segment at Ile87–Ala131 is disordered.

The protein belongs to the bacterial ribosomal protein bS16 family.

This is Small ribosomal subunit protein bS16 from Prochlorococcus marinus (strain SARG / CCMP1375 / SS120).